The following is a 199-amino-acid chain: dITP/XTP pyrophosphatase (199 aa).

8-13 contributes to the substrate binding site; sequence SGNAGK. The active-site Proton acceptor is aspartate 69. Aspartate 69 is a binding site for Mg(2+). Residues serine 70, 154-157, lysine 177, and 182-183 contribute to the substrate site; these read FGYN and HR.

This sequence belongs to the HAM1 NTPase family. In terms of assembly, homodimer. Mg(2+) is required as a cofactor.

It catalyses the reaction XTP + H2O = XMP + diphosphate + H(+). The enzyme catalyses dITP + H2O = dIMP + diphosphate + H(+). The catalysed reaction is ITP + H2O = IMP + diphosphate + H(+). Pyrophosphatase that catalyzes the hydrolysis of nucleoside triphosphates to their monophosphate derivatives, with a high preference for the non-canonical purine nucleotides XTP (xanthosine triphosphate), dITP (deoxyinosine triphosphate) and ITP. Seems to function as a house-cleaning enzyme that removes non-canonical purine nucleotides from the nucleotide pool, thus preventing their incorporation into DNA/RNA and avoiding chromosomal lesions. The protein is dITP/XTP pyrophosphatase of Xylella fastidiosa (strain Temecula1 / ATCC 700964).